Here is a 348-residue protein sequence, read N- to C-terminus: D-alanine--D-alanine ligase (348 aa).

In terms of domain architecture, ATP-grasp spans Lys-132–Thr-334. Leu-162–Glu-217 serves as a coordination point for ATP. Residues Asp-288, Glu-301, and Asn-303 each coordinate Mg(2+).

This sequence belongs to the D-alanine--D-alanine ligase family. Mg(2+) is required as a cofactor. It depends on Mn(2+) as a cofactor.

Its subcellular location is the cytoplasm. It catalyses the reaction 2 D-alanine + ATP = D-alanyl-D-alanine + ADP + phosphate + H(+). It participates in cell wall biogenesis; peptidoglycan biosynthesis. Functionally, cell wall formation. The protein is D-alanine--D-alanine ligase of Streptococcus pyogenes serotype M2 (strain MGAS10270).